The chain runs to 1057 residues: Carbamoyl phosphate synthase large chain (1057 aa).

The carboxyphosphate synthetic domain stretch occupies residues 1–401 (MPKRDDIKTI…SLLKAIRSLE (401 aa)). Positions 129, 169, 175, 176, 208, 210, 215, 241, 242, 243, 284, and 298 each coordinate ATP. The ATP-grasp 1 domain maps to 133–327 (RTLMNDLNVP…IAKLAAKIAV (195 aa)). Mg(2+)-binding residues include Q284, E298, and N300. Residues Q284, E298, and N300 each coordinate Mn(2+). An oligomerization domain region spans residues 402-546 (YGVHHLGLSN…YGTYEYENES (145 aa)). Residues 547–929 (IVTDKEKILV…ALYKGLTGSG (383 aa)) are carbamoyl phosphate synthetic domain. In terms of domain architecture, ATP-grasp 2 spans 671-861 (EALLREIAVP…MAQLAMRAIM (191 aa)). ATP is bound by residues R707, R746, L748, E752, G777, V778, H779, S780, Q820, and E832. Positions 820, 832, and 834 each coordinate Mg(2+). The Mn(2+) site is built by Q820, E832, and N834. The MGS-like domain occupies 930–1057 (FEVKDHGTVL…ESMTFTMRNV (128 aa)). Residues 930-1057 (FEVKDHGTVL…ESMTFTMRNV (128 aa)) are allosteric domain.

This sequence belongs to the CarB family. Composed of two chains; the small (or glutamine) chain promotes the hydrolysis of glutamine to ammonia, which is used by the large (or ammonia) chain to synthesize carbamoyl phosphate. Tetramer of heterodimers (alpha,beta)4. It depends on Mg(2+) as a cofactor. The cofactor is Mn(2+).

It carries out the reaction hydrogencarbonate + L-glutamine + 2 ATP + H2O = carbamoyl phosphate + L-glutamate + 2 ADP + phosphate + 2 H(+). The catalysed reaction is hydrogencarbonate + NH4(+) + 2 ATP = carbamoyl phosphate + 2 ADP + phosphate + 2 H(+). Its pathway is amino-acid biosynthesis; L-arginine biosynthesis; carbamoyl phosphate from bicarbonate: step 1/1. The protein operates within pyrimidine metabolism; UMP biosynthesis via de novo pathway; (S)-dihydroorotate from bicarbonate: step 1/3. In terms of biological role, large subunit of the glutamine-dependent carbamoyl phosphate synthetase (CPSase). CPSase catalyzes the formation of carbamoyl phosphate from the ammonia moiety of glutamine, carbonate, and phosphate donated by ATP, constituting the first step of 2 biosynthetic pathways, one leading to arginine and/or urea and the other to pyrimidine nucleotides. The large subunit (synthetase) binds the substrates ammonia (free or transferred from glutamine from the small subunit), hydrogencarbonate and ATP and carries out an ATP-coupled ligase reaction, activating hydrogencarbonate by forming carboxy phosphate which reacts with ammonia to form carbamoyl phosphate. This is Carbamoyl phosphate synthase large chain from Staphylococcus epidermidis (strain ATCC 12228 / FDA PCI 1200).